The primary structure comprises 529 residues: MQQRRPVRRALLSVSDKAGIVEFAQALSARGVELLSTGGTARLLADKGLPVTEVSDYTGFPEMMDGRVKTLHPKVHGGILGRRGQDDGIMQQHGIAPIDMVVVNLYPFAQTVAREGCSLEDAVENIDIGGPTMVRSAAKNHKDVAIVVKSSDYDAIINEMDANEGSLTLVTRFDLAIKAFEHTAAYDSMIANYFGSMVPAYHGESKEAAGRFPRTLNLNFIKKQDMRYGENSHQQAAFYIEENVKEASVATATQLQGKALSYNNIADTDAALECVKEFNEPACVIVKHANPCGVAVSNSILDAYDRAYKTDPTSAFGGIIAFNRELDAETAQAIISRQFVEVIIAPSASEEALKITAAKQNVRVLTCGQWDTRVAGLDFKRVNGGLLVQDRDLGMVTAGELRVVSKRQPTEQELRDALFCWKVAKFVKSNAIVYAKDNMTIGIGAGQMSRVYSAKIAGIKAGDEGLEVKGSAMASDAFFPFRDGIDAAAAVGITCVIQPGGSIRDDEVIAAADEHGIAMIFTDMRHFRH.

Residues 1–148 (MQQRRPVRRA…KNHKDVAIVV (148 aa)) form the MGS-like domain.

It belongs to the PurH family.

It catalyses the reaction (6R)-10-formyltetrahydrofolate + 5-amino-1-(5-phospho-beta-D-ribosyl)imidazole-4-carboxamide = 5-formamido-1-(5-phospho-D-ribosyl)imidazole-4-carboxamide + (6S)-5,6,7,8-tetrahydrofolate. The enzyme catalyses IMP + H2O = 5-formamido-1-(5-phospho-D-ribosyl)imidazole-4-carboxamide. It functions in the pathway purine metabolism; IMP biosynthesis via de novo pathway; 5-formamido-1-(5-phospho-D-ribosyl)imidazole-4-carboxamide from 5-amino-1-(5-phospho-D-ribosyl)imidazole-4-carboxamide (10-formyl THF route): step 1/1. The protein operates within purine metabolism; IMP biosynthesis via de novo pathway; IMP from 5-formamido-1-(5-phospho-D-ribosyl)imidazole-4-carboxamide: step 1/1. The polypeptide is Bifunctional purine biosynthesis protein PurH (Klebsiella pneumoniae subsp. pneumoniae (strain ATCC 700721 / MGH 78578)).